Consider the following 327-residue polypeptide: Ornithine carbamoyltransferase 2, anabolic (327 aa).

Residues arginine 109 and 136–139 (HPTQ) each bind carbamoyl phosphate. L-ornithine contacts are provided by residues asparagine 168, aspartate 232, and 236–237 (SM). Carbamoyl phosphate-binding positions include 273 to 274 (CL) and arginine 313.

Belongs to the aspartate/ornithine carbamoyltransferase superfamily. OTCase family. Homotrimer.

It localises to the cytoplasm. The catalysed reaction is carbamoyl phosphate + L-ornithine = L-citrulline + phosphate + H(+). It participates in amino-acid biosynthesis; L-arginine biosynthesis; L-arginine from L-ornithine and carbamoyl phosphate: step 1/3. Functionally, plays an important role in the survival and pathogenicity of P.syringae. Phaseolotoxin is a virulence factor that inhibits the catalysis of the host OTCase. Phaseolotoxin-producing bacteria do not suffer autointoxication because they possess the anabolic OTCase ArgK which can function even in the presence of phaseolotoxin. Reversibly catalyzes the transfer of the carbamoyl group from carbamoyl phosphate (CP) to the N(epsilon) atom of ornithine (ORN) to produce L-citrulline, which is a substrate for argininosuccinate synthetase, the enzyme involved in the final step in arginine biosynthesis. This Pseudomonas savastanoi pv. phaseolicola (Pseudomonas syringae pv. phaseolicola) protein is Ornithine carbamoyltransferase 2, anabolic.